A 247-amino-acid polypeptide reads, in one-letter code: Adenosylcobinamide-GDP ribazoletransferase (247 aa).

5 helical membrane passes run 34 to 54 (IVMF…IFIL), 59 to 79 (CGIP…TGGF), 113 to 133 (GGLA…ELAL), 138 to 158 (MLAA…LLMY), and 194 to 214 (VLLL…AIFI).

Belongs to the CobS family. Mg(2+) is required as a cofactor.

The protein localises to the cell inner membrane. It carries out the reaction alpha-ribazole + adenosylcob(III)inamide-GDP = adenosylcob(III)alamin + GMP + H(+). The catalysed reaction is alpha-ribazole 5'-phosphate + adenosylcob(III)inamide-GDP = adenosylcob(III)alamin 5'-phosphate + GMP + H(+). It functions in the pathway cofactor biosynthesis; adenosylcobalamin biosynthesis; adenosylcobalamin from cob(II)yrinate a,c-diamide: step 7/7. Joins adenosylcobinamide-GDP and alpha-ribazole to generate adenosylcobalamin (Ado-cobalamin). Also synthesizes adenosylcobalamin 5'-phosphate from adenosylcobinamide-GDP and alpha-ribazole 5'-phosphate. This chain is Adenosylcobinamide-GDP ribazoletransferase, found in Salmonella typhi.